The chain runs to 141 residues: MIKKIITTVKLALPAGKATPAPPVGPALGQHGVNIMMFVKEYNARTEEQKGSIIPAEIQIYEDKSFTFILKTPPASILLKQATGIEKATKAPRREQVGSISYKEIQNIAKIKINELNTKDLSKAIKIIEGTAKNMGISVET.

It belongs to the universal ribosomal protein uL11 family. As to quaternary structure, part of the ribosomal stalk of the 50S ribosomal subunit. Interacts with L10 and the large rRNA to form the base of the stalk. L10 forms an elongated spine to which L12 dimers bind in a sequential fashion forming a multimeric L10(L12)X complex.

Its subcellular location is the plastid. The protein localises to the chloroplast. In terms of biological role, forms part of the ribosomal stalk which helps the ribosome interact with GTP-bound translation factors. The protein is Large ribosomal subunit protein uL11c of Cyanidium caldarium (Red alga).